The sequence spans 260 residues: Thrombin-like enzyme acutobin (260 aa).

An N-terminal signal peptide occupies residues 1–18 (MVLIRVLANLLILQLSYA). A propeptide spanning residues 19–24 (QKSSEL) is cleaved from the precursor. Residues 25 to 251 (VIGGVECDIN…YNDWIRSITA (227 aa)) form the Peptidase S1 domain. 6 cysteine pairs are disulfide-bonded: Cys-31–Cys-165, Cys-52–Cys-68, Cys-102–Cys-258, Cys-144–Cys-212, Cys-176–Cys-191, and Cys-202–Cys-227. The Charge relay system role is filled by His-67. Asn-101 and Asn-105 each carry an N-linked (GlcNAc...) asparagine glycan. Residue Asp-112 is the Charge relay system of the active site. The N-linked (GlcNAc...) asparagine glycan is linked to Asn-124. Residue Ser-206 is the Charge relay system of the active site. An N-linked (GlcNAc...) asparagine glycan is attached at Asn-253.

The protein belongs to the peptidase S1 family. Snake venom subfamily. In terms of assembly, monomer. N-glycosylated. Expressed by the venom gland.

The protein localises to the secreted. Its function is as follows. Thrombin-like snake venom serine protease that coagulates human fibrinogen by hydrolysis of the alpha chains (FGA). The polypeptide is Thrombin-like enzyme acutobin (Deinagkistrodon acutus (Hundred-pace snake)).